The sequence spans 245 residues: tRNA pseudouridine synthase A (245 aa).

Asp-52 acts as the Nucleophile in catalysis. Substrate is bound at residue Tyr-111.

Belongs to the tRNA pseudouridine synthase TruA family. In terms of assembly, homodimer.

It carries out the reaction uridine(38/39/40) in tRNA = pseudouridine(38/39/40) in tRNA. Its function is as follows. Formation of pseudouridine at positions 38, 39 and 40 in the anticodon stem and loop of transfer RNAs. This chain is tRNA pseudouridine synthase A, found in Rickettsia canadensis (strain McKiel).